Here is an 886-residue protein sequence, read N- to C-terminus: Isoleucine--tRNA ligase (886 aa).

A 'HIGH' region motif is present at residues 60-70 (PYANGDIHIGH). Residue E546 coordinates L-isoleucyl-5'-AMP. Positions 587–591 (KMSKS) match the 'KMSKS' region motif. K590 contributes to the ATP binding site. 4 residues coordinate Zn(2+): C856, C859, C870, and C873.

Belongs to the class-I aminoacyl-tRNA synthetase family. IleS type 1 subfamily. As to quaternary structure, monomer. Zn(2+) serves as cofactor.

It is found in the cytoplasm. It carries out the reaction tRNA(Ile) + L-isoleucine + ATP = L-isoleucyl-tRNA(Ile) + AMP + diphosphate. Its function is as follows. Catalyzes the attachment of isoleucine to tRNA(Ile). As IleRS can inadvertently accommodate and process structurally similar amino acids such as valine, to avoid such errors it has two additional distinct tRNA(Ile)-dependent editing activities. One activity is designated as 'pretransfer' editing and involves the hydrolysis of activated Val-AMP. The other activity is designated 'posttransfer' editing and involves deacylation of mischarged Val-tRNA(Ile). This Mesomycoplasma hyopneumoniae (strain 232) (Mycoplasma hyopneumoniae) protein is Isoleucine--tRNA ligase.